We begin with the raw amino-acid sequence, 593 residues long: Trehalose synthase/amylase TreS (593 aa).

Asp90 contacts substrate. Asn132 lines the Ca(2+) pocket. Residues His133 and Gln198 each contribute to the substrate site. Residue Asp200 participates in Ca(2+) binding. Residue Arg228 coordinates substrate. Asp230 serves as the catalytic Nucleophile. Tyr234, Leu235, and Glu237 together coordinate Ca(2+). Glu272 functions as the Proton donor in the catalytic mechanism. Positions 341 and 342 each coordinate substrate.

The protein belongs to the glycosyl hydrolase 13 family. TreS subfamily. Homohexamer.

The enzyme catalyses D-maltose = alpha,alpha-trehalose. The catalysed reaction is Endohydrolysis of (1-&gt;4)-alpha-D-glucosidic linkages in polysaccharides containing three or more (1-&gt;4)-alpha-linked D-glucose units.. Its pathway is glycan biosynthesis; glycogen biosynthesis. With respect to regulation, the amylase activity is stimulated by addition of Ca(2+), but this cation and other divalent cations inhibit the trehalose synthase activity. In addition, trehalose synthase activity, but not amylase activity, is strongly inhibited, and in a competitive manner, by validoxylamine. On the other hand, amylase, but not trehalose synthase activity, is inhibited by the known transition-state amylase inhibitor, acarbose, suggesting the possibility of two different active sites. Other metal ions such as Mg(2+), Mn(2+), and Co(2+) are also somewhat effective in the stimulation of amylase activity, but Hg(2+), Cu(2+), Ni(2+) and Zn(2+) are inhibitory. Its function is as follows. Catalyzes the reversible interconversion of maltose and trehalose by transglucosylation. Maltose is the preferred substrate. To a lesser extent, also displays amylase activity, catalyzing the endohydrolysis of (1-&gt;4)-alpha-D-glucosidic linkages in glycogen and maltooligosaccharides such as maltoheptaose, to produce maltose which then can be converted to trehalose. TreS plays a key role in the utilization of trehalose for the production of glycogen and alpha-glucan via the TreS-Pep2 branch involved in the biosynthesis of maltose-1-phosphate (M1P). Might also function as a sensor and/or regulator of trehalose levels within the cell. Thus, when trehalose levels in the cell become dangerously low, TreS can expedite the conversion of glycogen to maltose via its amylase activity and then convert the maltose to trehalose; but this enzyme also can expedite or promote the conversion of trehalose to glycogen when cytoplasmic trehalose levels become too high. Is also able to catalyze the hydrolytic cleavage of alpha-aryl glucosides, as well as alpha-glucosyl fluoride in vitro. The polypeptide is Trehalose synthase/amylase TreS (Mycolicibacterium smegmatis (strain ATCC 700084 / mc(2)155) (Mycobacterium smegmatis)).